The chain runs to 127 residues: ALK and LTK ligand 1 (127 aa).

Positions 1 to 27 (MWLTKPSTPVSALLLLALALSPPGTQG) are cleaved as a signal peptide. 2 cysteine pairs are disulfide-bonded: Cys-88–Cys-124 and Cys-102–Cys-111.

Belongs to the ALKAL family.

The protein resides in the secreted. It is found in the cell membrane. Functionally, cytokine that acts as a physiological ligand for receptor tyrosine kinase LTK, leading to its activation. Monomeric ALKAL1 binds to LTK, leading to LTK homodimerization and activation. In contrast to ALKAL2, does not act as a potent physiological ligand for ALK. The chain is ALK and LTK ligand 1 from Mus musculus (Mouse).